We begin with the raw amino-acid sequence, 190 residues long: A-type ATP synthase subunit E (190 aa).

This sequence belongs to the V-ATPase E subunit family. Has multiple subunits with at least A(3), B(3), C, D, E, F, H, I and proteolipid K(x).

It localises to the cell membrane. Functionally, component of the A-type ATP synthase that produces ATP from ADP in the presence of a proton gradient across the membrane. The chain is A-type ATP synthase subunit E from Pyrobaculum neutrophilum (strain DSM 2338 / JCM 9278 / NBRC 100436 / V24Sta) (Thermoproteus neutrophilus).